We begin with the raw amino-acid sequence, 717 residues long: CRISPR-associated protein Cas8b (717 aa).

Disordered regions lie at residues 263–283 (IGVF…DQSW) and 698–717 (HEKE…STTN). The span at 701-717 (EDEDDQDTEEPAESTTN) shows a compositional bias: acidic residues.

It localises to the cytoplasm. Its function is as follows. CRISPR (clustered regularly interspaced short palindromic repeat) is an adaptive immune system that provides protection against mobile genetic elements (viruses, transposable elements and conjugative plasmids). CRISPR clusters contain sequences complementary to antecedent mobile elements and target invading nucleic acids. CRISPR clusters are transcribed and processed into CRISPR RNA (crRNA). Plasmid targeted by CRISPR locus P1 transform wild-type cells very poorly. This subunit might be involved in stabilizing crRNA. The chain is CRISPR-associated protein Cas8b from Haloferax volcanii (strain ATCC 29605 / DSM 3757 / JCM 8879 / NBRC 14742 / NCIMB 2012 / VKM B-1768 / DS2) (Halobacterium volcanii).